Consider the following 575-residue polypeptide: V-type ATP synthase alpha chain (575 aa).

Gly238–Thr245 contributes to the ATP binding site.

The protein belongs to the ATPase alpha/beta chains family.

The catalysed reaction is ATP + H2O + 4 H(+)(in) = ADP + phosphate + 5 H(+)(out). Functionally, produces ATP from ADP in the presence of a proton gradient across the membrane. The V-type alpha chain is a catalytic subunit. The chain is V-type ATP synthase alpha chain (atpA) from Borreliella burgdorferi (strain ATCC 35210 / DSM 4680 / CIP 102532 / B31) (Borrelia burgdorferi).